We begin with the raw amino-acid sequence, 295 residues long: Phosphatidylglycerol--prolipoprotein diacylglyceryl transferase (295 aa).

The next 4 membrane-spanning stretches (helical) occupy residues Trp28–Thr48, Leu69–Tyr89, Ile101–Ala121, and Ile131–Gly151. An a 1,2-diacyl-sn-glycero-3-phospho-(1'-sn-glycerol)-binding site is contributed by Arg152. The next 3 membrane-spanning stretches (helical) occupy residues Gln195–Trp215, Gly224–Phe244, and Gly268–Leu288.

The protein belongs to the Lgt family.

Its subcellular location is the cell inner membrane. It catalyses the reaction L-cysteinyl-[prolipoprotein] + a 1,2-diacyl-sn-glycero-3-phospho-(1'-sn-glycerol) = an S-1,2-diacyl-sn-glyceryl-L-cysteinyl-[prolipoprotein] + sn-glycerol 1-phosphate + H(+). Its pathway is protein modification; lipoprotein biosynthesis (diacylglyceryl transfer). Catalyzes the transfer of the diacylglyceryl group from phosphatidylglycerol to the sulfhydryl group of the N-terminal cysteine of a prolipoprotein, the first step in the formation of mature lipoproteins. This chain is Phosphatidylglycerol--prolipoprotein diacylglyceryl transferase, found in Ruegeria pomeroyi (strain ATCC 700808 / DSM 15171 / DSS-3) (Silicibacter pomeroyi).